A 287-amino-acid chain; its full sequence is 4-hydroxybenzoate octaprenyltransferase (287 aa).

The next 9 membrane-spanning stretches (helical) occupy residues Ile22–Trp42, Leu45–Ile65, Ala95–Trp115, Ser116–Arg136, Leu140–Ala160, Gly162–Tyr182, Ile214–Phe234, Pro237–Val257, and Cys264–Ile284.

It belongs to the UbiA prenyltransferase family. It depends on Mg(2+) as a cofactor.

The protein resides in the cell inner membrane. It carries out the reaction all-trans-octaprenyl diphosphate + 4-hydroxybenzoate = 4-hydroxy-3-(all-trans-octaprenyl)benzoate + diphosphate. It functions in the pathway cofactor biosynthesis; ubiquinone biosynthesis. Its function is as follows. Catalyzes the prenylation of para-hydroxybenzoate (PHB) with an all-trans polyprenyl group. Mediates the second step in the final reaction sequence of ubiquinone-8 (UQ-8) biosynthesis, which is the condensation of the polyisoprenoid side chain with PHB, generating the first membrane-bound Q intermediate 3-octaprenyl-4-hydroxybenzoate. The protein is 4-hydroxybenzoate octaprenyltransferase of Colwellia psychrerythraea (strain 34H / ATCC BAA-681) (Vibrio psychroerythus).